Here is a 496-residue protein sequence, read N- to C-terminus: Hemophilin secretion modulator (496 aa).

The signal sequence occupies residues 1 to 19; the sequence is MKRTLLCCLTLLSCPFLYA. The next 14 beta stranded transmembrane spans lie at 198 to 208, 253 to 263, 268 to 277, 291 to 301, 305 to 315, 327 to 337, 341 to 351, 365 to 374, 380 to 389, 403 to 413, 418 to 427, 446 to 455, 462 to 472, and 486 to 495; these read WQGSVSAGYTY, DYEASLIKRYA, HGVALRALAF, TININAGYSYF, NQIGVSPLFEH, WGARAEWMHFI, KAFKLEAESKD, SSAFATFWKI, TFFGGLDVLD, QGVRLGLSKSW, NTTLLSSYRW, QNHTFVVQMP, MTPNLTYRYNH, and HNISFKLEHR.

It belongs to the Slam family.

The protein localises to the cell outer membrane. Its function is as follows. Part of a high affinity heme acquisition system. Mediates the secretion of the hemophilin HphA across the outer membrane into the extracellular environment. Plays a supporting role for full virulence. The chain is Hemophilin secretion modulator from Acinetobacter baumannii.